Consider the following 155-residue polypeptide: Small ribosomal subunit protein uS7c (155 aa).

Belongs to the universal ribosomal protein uS7 family. Part of the 30S ribosomal subunit.

It localises to the plastid. The protein localises to the chloroplast. Functionally, one of the primary rRNA binding proteins, it binds directly to 16S rRNA where it nucleates assembly of the head domain of the 30S subunit. The chain is Small ribosomal subunit protein uS7c (rps7) from Marchantia polymorpha (Common liverwort).